Consider the following 114-residue polypeptide: Large ribosomal subunit protein bL17 (114 aa).

It belongs to the bacterial ribosomal protein bL17 family. As to quaternary structure, part of the 50S ribosomal subunit. Contacts protein L32.

The protein is Large ribosomal subunit protein bL17 of Clostridium acetobutylicum (strain ATCC 824 / DSM 792 / JCM 1419 / IAM 19013 / LMG 5710 / NBRC 13948 / NRRL B-527 / VKM B-1787 / 2291 / W).